Here is a 291-residue protein sequence, read N- to C-terminus: DNA N6-methyl adenine demethylase (291 aa).

Residues 85 to 256 (GLTLIHNFLS…RGRRIALTMR (172 aa)) enclose the Fe2OG dioxygenase domain. 2-oxoglutarate is bound at residue 171-173 (LEY). 3 residues coordinate Fe cation: histidine 184, aspartate 186, and histidine 239.

Belongs to the alkB family. As to quaternary structure, interacts with top-2; the interaction is required for localization of top-2 to DNA. Also interacts with mtss-1, his-24, ule-3, C18B2.3, pgl-1, ceh-93, mcm-4 and F37C4.5. It depends on Fe(2+) as a cofactor.

The protein localises to the nucleus. The catalysed reaction is an N(6)-methyl-2'-deoxyadenosine in DNA + 2-oxoglutarate + O2 = a 2'-deoxyadenosine in DNA + formaldehyde + succinate + CO2. Functionally, dioxygenase that specifically demethylates DNA methylated on the 6th position of adenine (N(6)-methyladenosine) DNA. N(6)-methyladenosine (m6A) DNA is involved in epigenetic transgenerational inheritance. Plays an essential role in DNA replication and repair in the germline during meiosis. Binds to components of the DNA replication machinery such as top-2, and directs their localization to DNA to control DNA replication. The polypeptide is DNA N6-methyl adenine demethylase (Caenorhabditis elegans).